We begin with the raw amino-acid sequence, 151 residues long: Putative pre-16S rRNA nuclease (151 aa).

It belongs to the YqgF nuclease family.

It is found in the cytoplasm. Functionally, could be a nuclease involved in processing of the 5'-end of pre-16S rRNA. This chain is Putative pre-16S rRNA nuclease, found in Bifidobacterium adolescentis (strain ATCC 15703 / DSM 20083 / NCTC 11814 / E194a).